Reading from the N-terminus, the 582-residue chain is ATP-dependent lipid A-core flippase (582 aa).

A run of 5 helical transmembrane segments spans residues 16-36, 63-83, 153-173, 253-273, and 275-295; these read LWPT…ALIL, VLVW…ITSY, IIGL…ILIV, PIIQ…ASFP, and VMDN…IALM. The 283-residue stretch at 28 to 310 folds into the ABC transmembrane type-1 domain; sequence IVAGVALILN…LTNVNAQFQR (283 aa). Residues 342–578 enclose the ABC transporter domain; the sequence is VEFRNVTFTY…RGVYAQLHKM (237 aa). 376-383 contributes to the ATP binding site; the sequence is GRSGSGKS.

Belongs to the ABC transporter superfamily. Lipid exporter (TC 3.A.1.106) family. As to quaternary structure, homodimer.

The protein resides in the cell inner membrane. The catalysed reaction is ATP + H2O + lipid A-core oligosaccharideSide 1 = ADP + phosphate + lipid A-core oligosaccharideSide 2.. Involved in lipopolysaccharide (LPS) biosynthesis. Translocates lipid A-core from the inner to the outer leaflet of the inner membrane. Transmembrane domains (TMD) form a pore in the inner membrane and the ATP-binding domain (NBD) is responsible for energy generation. This chain is ATP-dependent lipid A-core flippase, found in Shigella sonnei (strain Ss046).